Consider the following 122-residue polypeptide: Urease subunit beta (122 aa).

Residues 92-122 (GLRPEYAGELDGRGHEPTAPNYGEKGQGHFE) are disordered.

The protein belongs to the urease beta subunit family. In terms of assembly, heterotrimer of UreA (gamma), UreB (beta) and UreC (alpha) subunits. Three heterotrimers associate to form the active enzyme.

The protein resides in the cytoplasm. It catalyses the reaction urea + 2 H2O + H(+) = hydrogencarbonate + 2 NH4(+). Its pathway is nitrogen metabolism; urea degradation; CO(2) and NH(3) from urea (urease route): step 1/1. This Saccharopolyspora erythraea (strain ATCC 11635 / DSM 40517 / JCM 4748 / NBRC 13426 / NCIMB 8594 / NRRL 2338) protein is Urease subunit beta.